A 584-amino-acid polypeptide reads, in one-letter code: 2-succinyl-5-enolpyruvyl-6-hydroxy-3-cyclohexene-1-carboxylate synthase (584 aa).

It belongs to the TPP enzyme family. MenD subfamily. Homodimer. Mg(2+) is required as a cofactor. Mn(2+) serves as cofactor. The cofactor is thiamine diphosphate.

The catalysed reaction is isochorismate + 2-oxoglutarate + H(+) = 5-enolpyruvoyl-6-hydroxy-2-succinyl-cyclohex-3-ene-1-carboxylate + CO2. It participates in quinol/quinone metabolism; 1,4-dihydroxy-2-naphthoate biosynthesis; 1,4-dihydroxy-2-naphthoate from chorismate: step 2/7. The protein operates within quinol/quinone metabolism; menaquinone biosynthesis. Functionally, catalyzes the thiamine diphosphate-dependent decarboxylation of 2-oxoglutarate and the subsequent addition of the resulting succinic semialdehyde-thiamine pyrophosphate anion to isochorismate to yield 2-succinyl-5-enolpyruvyl-6-hydroxy-3-cyclohexene-1-carboxylate (SEPHCHC). The chain is 2-succinyl-5-enolpyruvyl-6-hydroxy-3-cyclohexene-1-carboxylate synthase from Bacillus cytotoxicus (strain DSM 22905 / CIP 110041 / 391-98 / NVH 391-98).